A 443-amino-acid chain; its full sequence is GPI mannosyltransferase 1 (443 aa).

Helical transmembrane passes span proline 8–tryptophan 28, proline 68–glycine 88, alanine 90–threonine 110, threonine 136–leucine 156, isoleucine 160–tyrosine 180, leucine 232–glycine 252, phenylalanine 273–valine 291, phenylalanine 302–leucine 322, serine 347–leucine 367, isoleucine 374–leucine 394, and leucine 406–alanine 426.

It belongs to the PIGM family.

The protein resides in the endoplasmic reticulum membrane. It functions in the pathway glycolipid biosynthesis; glycosylphosphatidylinositol-anchor biosynthesis. In terms of biological role, mannosyltransferase involved in glycosylphosphatidylinositol-anchor biosynthesis. Transfers the first alpha-1,4-mannose to GlcN-acyl-PI during GPI precursor assembly. Required for cell wall integrity. The polypeptide is GPI mannosyltransferase 1 (gpi14) (Emericella nidulans (strain FGSC A4 / ATCC 38163 / CBS 112.46 / NRRL 194 / M139) (Aspergillus nidulans)).